We begin with the raw amino-acid sequence, 141 residues long: Putative antiporter subunit mnhB2 (141 aa).

The next 4 membrane-spanning stretches (helical) occupy residues 10–30 (SVTK…FFAG), 35–55 (GGGF…FLAF), 70–90 (KLMI…MFFG), and 116–136 (LFEL…MLSI).

It belongs to the CPA3 antiporters (TC 2.A.63) subunit B family. May form a heterooligomeric complex that consists of seven subunits: mnhA2, mnhB2, mnhC2, mnhD2, mnhE2, mnhF2 and mnhG2.

The protein localises to the cell membrane. The polypeptide is Putative antiporter subunit mnhB2 (mnhB2) (Staphylococcus epidermidis (strain ATCC 35984 / DSM 28319 / BCRC 17069 / CCUG 31568 / BM 3577 / RP62A)).